A 693-amino-acid polypeptide reads, in one-letter code: MADPTTYRPRPGEIPDAPGVYRFRDPHGRVVYVGKAKSLRSRLSSYFQDLSALHPRTQQMVTTASSVEWTVVGTEVEALQLEYSWIKEFDPRFNVKYRDDKSYPYLAVTMGEEVPRVQVMRGAKRKGTRYFGPYGHAWAIRETVDLLLRVFPVRTCSSGVYKRAAASGRPCLLGYIDKCSAPCVGRISVEDHRDLAEDFCSFMAGESGVFLRRLESEMAAASAELDFERAARVRDDINALRRVVEKNAVVLADGTDADVFALAADELEVSVQVFHVRGGRVRGQRGWVTERVEDLDDGALVERLLQQVYGPYATEKGPDGGATGVPREVLVPALPDDAVELAEWLSTLRGSRVSLRIPQRGEKRALAETVRTNAQQALALHKTRRAGDLTSRSRALSELQEELGLAESPLRIECYDISTLQGTHQVGSMVVFEDGLARKSEYRQFVVRGADGQGARDDTEAMHEVITRRFRRYLAQRDVGVAGGGSGEVPAEDDDGVAIAGPVDPETGRPARFAYPPNLVVVDGGPPQVAAAQRALDELGVSDVALVGLAKRLEEVWLPGEEYPLVLPRASEGLYLLQRVRDEAHRFAITHHRKRRGKSMTRSTLDDVPGLGPSRQAALLQAFGSVRRIRAATPEEIAAVPGFGRRTAEQVLAALAPSPDDATTEPGAVGEPGTADGAAADPDGRDAVVVPEG.

The GIY-YIG domain occupies 16 to 95 (DAPGVYRFRD…IKEFDPRFNV (80 aa)). In terms of domain architecture, UVR spans 208–243 (GVFLRRLESEMAAASAELDFERAARVRDDINALRRV). Residues 656–693 (APSPDDATTEPGAVGEPGTADGAAADPDGRDAVVVPEG) are disordered. A compositionally biased stretch (low complexity) spans 672-693 (PGTADGAAADPDGRDAVVVPEG).

It belongs to the UvrC family. Interacts with UvrB in an incision complex.

The protein localises to the cytoplasm. In terms of biological role, the UvrABC repair system catalyzes the recognition and processing of DNA lesions. UvrC both incises the 5' and 3' sides of the lesion. The N-terminal half is responsible for the 3' incision and the C-terminal half is responsible for the 5' incision. The polypeptide is UvrABC system protein C (Beutenbergia cavernae (strain ATCC BAA-8 / DSM 12333 / CCUG 43141 / JCM 11478 / NBRC 16432 / NCIMB 13614 / HKI 0122)).